The chain runs to 138 residues: Ribulose bisphosphate carboxylase small subunit (138 aa).

This sequence belongs to the RuBisCO small chain family. In terms of assembly, heterohexadecamer of 8 large and 8 small subunits.

The protein localises to the plastid. It is found in the chloroplast. Its function is as follows. RuBisCO catalyzes two reactions: the carboxylation of D-ribulose 1,5-bisphosphate, the primary event in carbon dioxide fixation, as well as the oxidative fragmentation of the pentose substrate in the photorespiration process. Both reactions occur simultaneously and in competition at the same active site. Although the small subunit is not catalytic it is essential for maximal activity. The chain is Ribulose bisphosphate carboxylase small subunit from Porphyridium aerugineum (Red microalga).